A 159-amino-acid chain; its full sequence is Ribosomal RNA large subunit methyltransferase H (159 aa).

S-adenosyl-L-methionine-binding positions include Leu76, Gly108, and 127–132 (FSKMTL).

This sequence belongs to the RNA methyltransferase RlmH family. In terms of assembly, homodimer.

The protein resides in the cytoplasm. It catalyses the reaction pseudouridine(1915) in 23S rRNA + S-adenosyl-L-methionine = N(3)-methylpseudouridine(1915) in 23S rRNA + S-adenosyl-L-homocysteine + H(+). Its function is as follows. Specifically methylates the pseudouridine at position 1915 (m3Psi1915) in 23S rRNA. This chain is Ribosomal RNA large subunit methyltransferase H, found in Bacillus thuringiensis subsp. konkukian (strain 97-27).